A 138-amino-acid chain; its full sequence is Translation initiation factor 2 subunit beta (138 aa).

It belongs to the eIF-2-beta/eIF-5 family. Heterotrimer composed of an alpha, a beta and a gamma chain.

In terms of biological role, eIF-2 functions in the early steps of protein synthesis by forming a ternary complex with GTP and initiator tRNA. The polypeptide is Translation initiation factor 2 subunit beta (Methanococcus maripaludis (strain DSM 14266 / JCM 13030 / NBRC 101832 / S2 / LL)).